A 214-amino-acid polypeptide reads, in one-letter code: Threonylcarbamoyl-AMP synthase (214 aa).

In terms of domain architecture, YrdC-like spans 9–214 (TDSVIQAAHW…GDALTGQIIR (206 aa)).

It belongs to the SUA5 family. TsaC subfamily.

The protein localises to the cytoplasm. The catalysed reaction is L-threonine + hydrogencarbonate + ATP = L-threonylcarbamoyladenylate + diphosphate + H2O. Its function is as follows. Required for the formation of a threonylcarbamoyl group on adenosine at position 37 (t(6)A37) in tRNAs that read codons beginning with adenine. Catalyzes the conversion of L-threonine, HCO(3)(-)/CO(2) and ATP to give threonylcarbamoyl-AMP (TC-AMP) as the acyladenylate intermediate, with the release of diphosphate. The protein is Threonylcarbamoyl-AMP synthase of Psychrobacter arcticus (strain DSM 17307 / VKM B-2377 / 273-4).